The sequence spans 208 residues: Uracil phosphoribosyltransferase (208 aa).

Residues R78, R103, and 130-138 (DPMFATGGT) each bind 5-phospho-alpha-D-ribose 1-diphosphate. Uracil contacts are provided by residues I193 and 198-200 (GDA). Residue D199 coordinates 5-phospho-alpha-D-ribose 1-diphosphate.

This sequence belongs to the UPRTase family. It depends on Mg(2+) as a cofactor.

The enzyme catalyses UMP + diphosphate = 5-phospho-alpha-D-ribose 1-diphosphate + uracil. The protein operates within pyrimidine metabolism; UMP biosynthesis via salvage pathway; UMP from uracil: step 1/1. Its activity is regulated as follows. Allosterically activated by GTP. In terms of biological role, catalyzes the conversion of uracil and 5-phospho-alpha-D-ribose 1-diphosphate (PRPP) to UMP and diphosphate. This is Uracil phosphoribosyltransferase from Campylobacter concisus (strain 13826).